The chain runs to 607 residues: Glutamine--fructose-6-phosphate aminotransferase [isomerizing] (607 aa).

Catalysis depends on C2, which acts as the Nucleophile; for GATase activity. In terms of domain architecture, Glutamine amidotransferase type-2 spans 2-217; it reads CGIIGIIGND…DGDWAVLTRN (216 aa). SIS domains follow at residues 283–422 and 455–597; these read IGID…ARGA and VCHD…VDQP. The active-site For Fru-6P isomerization activity is K602.

Homodimer.

The protein localises to the cytoplasm. The catalysed reaction is D-fructose 6-phosphate + L-glutamine = D-glucosamine 6-phosphate + L-glutamate. In terms of biological role, catalyzes the first step in hexosamine metabolism, converting fructose-6P into glucosamine-6P using glutamine as a nitrogen source. This Brucella melitensis biotype 1 (strain ATCC 23456 / CCUG 17765 / NCTC 10094 / 16M) protein is Glutamine--fructose-6-phosphate aminotransferase [isomerizing].